The sequence spans 310 residues: Homoserine O-acetyltransferase (310 aa).

Residue C142 is the Acyl-thioester intermediate of the active site. K163 and S192 together coordinate substrate. Catalysis depends on H235, which acts as the Proton acceptor. E237 is a catalytic residue. R249 contributes to the substrate binding site.

This sequence belongs to the MetA family.

Its subcellular location is the cytoplasm. It carries out the reaction L-homoserine + acetyl-CoA = O-acetyl-L-homoserine + CoA. The protein operates within amino-acid biosynthesis; L-methionine biosynthesis via de novo pathway; O-acetyl-L-homoserine from L-homoserine: step 1/1. Transfers an acetyl group from acetyl-CoA to L-homoserine, forming acetyl-L-homoserine. This chain is Homoserine O-acetyltransferase, found in Parabacteroides distasonis (strain ATCC 8503 / DSM 20701 / CIP 104284 / JCM 5825 / NCTC 11152).